A 79-amino-acid chain; its full sequence is D-alanyl carrier protein (79 aa).

A Carrier domain is found at 1–77 (MSIEETVIEL…KIVQGVEELQ (77 aa)). Serine 35 is subject to O-(pantetheine 4'-phosphoryl)serine.

It belongs to the DltC family. Post-translationally, 4'-phosphopantetheine is transferred from CoA to a specific serine of apo-DCP.

It is found in the cytoplasm. The protein operates within cell wall biogenesis; lipoteichoic acid biosynthesis. Functionally, carrier protein involved in the D-alanylation of lipoteichoic acid (LTA). The loading of thioester-linked D-alanine onto DltC is catalyzed by D-alanine--D-alanyl carrier protein ligase DltA. The DltC-carried D-alanyl group is further transferred to cell membrane phosphatidylglycerol (PG) by forming an ester bond, probably catalyzed by DltD. D-alanylation of LTA plays an important role in modulating the properties of the cell wall in Gram-positive bacteria, influencing the net charge of the cell wall. This Streptococcus pyogenes serotype M1 protein is D-alanyl carrier protein.